The following is a 392-amino-acid chain: Chaperone protein DnaJ (392 aa).

A J domain is found at 5–75 (DYYEVLGIDK…QKKQQYDQFG (71 aa)). The CR-type zinc finger occupies 148–229 (GVEKTIKYKR…CHGTGTAKET (82 aa)). Zn(2+) contacts are provided by Cys161, Cys164, Cys177, Cys180, Cys203, Cys206, Cys217, and Cys220. 4 CXXCXGXG motif repeats span residues 161–168 (CENCHGTG), 177–184 (CPTCNGQG), 203–210 (CPDCHGTG), and 217–224 (CKHCHGTG).

Belongs to the DnaJ family. Homodimer. It depends on Zn(2+) as a cofactor.

The protein resides in the cytoplasm. Its function is as follows. Participates actively in the response to hyperosmotic and heat shock by preventing the aggregation of stress-denatured proteins and by disaggregating proteins, also in an autonomous, DnaK-independent fashion. Unfolded proteins bind initially to DnaJ; upon interaction with the DnaJ-bound protein, DnaK hydrolyzes its bound ATP, resulting in the formation of a stable complex. GrpE releases ADP from DnaK; ATP binding to DnaK triggers the release of the substrate protein, thus completing the reaction cycle. Several rounds of ATP-dependent interactions between DnaJ, DnaK and GrpE are required for fully efficient folding. Also involved, together with DnaK and GrpE, in the DNA replication of plasmids through activation of initiation proteins. The protein is Chaperone protein DnaJ of Fusobacterium nucleatum subsp. nucleatum (strain ATCC 25586 / DSM 15643 / BCRC 10681 / CIP 101130 / JCM 8532 / KCTC 2640 / LMG 13131 / VPI 4355).